We begin with the raw amino-acid sequence, 1403 residues long: MNHEVMNLFNPQAPAQTFDSIRISIASPEKILSWSYGEIKKPETINYRTFKPERDGLFCARIFGPIKDYECLCGKYKRMKYKGIICEKCGVEVTLSRVRRERMGHIELAAPVAHIWFLKSLPGRISTLLDLTLKDIERVLYFENYIVTEPGLTSLKLHQLLSEEEYMLAIDEFGEDQFTAMIGAEAIYELLAGMELDKIANDLRLELAETTSELKQKKLIKRLKIVENFLESGNKPEWMIMKTIPVIPPDLRPLVPLDGGRFATSDLNDLYRRVINRNNRLKRLIELRAPGIIVRNEKRMVQEAVDALFDNGRRGRVITGANKRPLKSLSDMLKGKQGRFRQNLLGKRVDYSGRSVIVTGPELKLHQCGLPKKMALELFKPFIYARLDAKGYSSTVKQAKKLVEKEHPEVWDILDEVIREHPVLLNRAPTLHRLGIQAFEPILIEGKAIQLHPLVCTAFNADFDGDQMAVHVPLSLEAQLEARVLMMSTNNILHPANGAPIIVPSQDMVLGLYYLSIVSEKEPGEGMAFSDIGELHYALENKVVTLHTKIKGRVKNMGKDGKEVAKLYDTTPGRLIIGELLPRNPNISFDIVNQEMTKKNISKMIDYVYRHCGQKETVIFCDRIMQLGFSYACRAGISFGKDDMVIPDSKSRLVAETEALAKEYEQQYNDGLITQGEKYNKVVDAWGKCTDRVADEMMKRIQAVDFDPKTGRQRPMNSIYMMSHSGARGSANQMRQLAGMRGLMAKPSGEIIETPIISNFKEGLTVNEYFNSTHGARKGLADTALKTANSGYLTRRLVDVAQDAIISAVDCGTAKGLTMQPIVDAGQIVASLGQRILGRTALVDILHPVSGEVILEGGAMIEEADVAKIEEAGIQSVQIRSALTCETRLGVCAKCYGRDLARGTPVNQGEAVGVIAAQSIGEPGTQLTMRTFHLGGTAQVVDSSYLEASYEGTVEIRNRNVARNSEGHLVVMGRNMAILIKDELGKERVVHRISYGAHIFVDDGDVVKRGQRIAEWDPYTRPILTEVEGYVGFEDMVDGLSVTETADESTGITKRLVIDWRANPRGAELKPAIIIHADKEGKSIAKLYKGGEARYMMSVETILSVELGAHVKAGDVIARLPMESAKTKDITGGLPRVAELFEARRPKDHAIIAEVSGTIRFGRGYKNKRRIIIEPNDETLEPVEYLIPKGKLFHFQEGDQIEKGDYILDGNPAPHDILAIKGVEALASYLVNEIQEVYRLQGVLINDKHIEVIVRQMLQKVEITESGDSGYIPGDNVDRIELDEINDNLIAEGKKPASGNPILLGITKASLQTPSFISAASFQETTRVLTEAAVSGKIDTLQGLKENVIVGRLIPAGTGGTISQIRRIAAVRDDLIVDEQRKSSNNEVAKAMLTNMTAESVSK.

Zn(2+)-binding residues include C71, C73, C86, and C89. Residues D462, D464, and D466 each coordinate Mg(2+). Residues C811, C885, C892, and C895 each coordinate Zn(2+).

This sequence belongs to the RNA polymerase beta' chain family. As to quaternary structure, the RNAP catalytic core consists of 2 alpha, 1 beta, 1 beta' and 1 omega subunit. When a sigma factor is associated with the core the holoenzyme is formed, which can initiate transcription. The cofactor is Mg(2+). Zn(2+) is required as a cofactor.

It catalyses the reaction RNA(n) + a ribonucleoside 5'-triphosphate = RNA(n+1) + diphosphate. Functionally, DNA-dependent RNA polymerase catalyzes the transcription of DNA into RNA using the four ribonucleoside triphosphates as substrates. The chain is DNA-directed RNA polymerase subunit beta' from Bartonella tribocorum (strain CIP 105476 / IBS 506).